Here is a 247-residue protein sequence, read N- to C-terminus: Membrane-embedded CAAX protease MroQ (247 aa).

Residues M1–S17 form the signal peptide. The next 3 membrane-spanning stretches (helical) occupy residues V42–L62, I81–I101, and L119–L139. E141 is a catalytic residue. The next 2 helical transmembrane spans lie at I162–D182 and F183–T203.

It belongs to the peptidase U48 family.

It is found in the membrane. Participates in the regulation of the Agr quorum sensing activity and plays thereby an important role in virulence. Mechanistically, elicits a protease dependent control of Agr activity without playing a role in the processing of the pheromone-precursor AgrD. In Staphylococcus aureus (strain USA300), this protein is Membrane-embedded CAAX protease MroQ (mroQ).